The sequence spans 88 residues: Small ribosomal subunit protein bS20 (88 aa).

This sequence belongs to the bacterial ribosomal protein bS20 family.

Functionally, binds directly to 16S ribosomal RNA. The sequence is that of Small ribosomal subunit protein bS20 from Rhodopseudomonas palustris (strain BisA53).